The sequence spans 1373 residues: Disease resistance protein RRS1 (1373 aa).

Residues 5-146 (EKDEEFVCIS…EIVRDVYETH (142 aa)) form the TIR domain. In terms of domain architecture, NB-ARC spans 170–421 (IGIRCVGIWG…LLEGCGFFPH (252 aa)). Residue 179–186 (GMPGIGKT) coordinates ATP. 9 LRR repeats span residues 498–522 (SEEI…AFKN), 535–553 (NPEV…HSLP), 554–575 (NELR…NFDP), 577–598 (HLVE…TKNL), 621–646 (AENL…RLLR), 665–688 (PPNI…TVKP), 742–766 (LPNM…SIQG), 768–793 (PRFL…SLEI), and 831–854 (PRNL…PLSL). The Nuclear localization signal motif lies at 988-1005 (RNFHCWAPGKVVPKVRKD). Residues 1204–1272 (IPAIDEGDLW…YLSEHNHPRP (69 aa)) constitute a DNA-binding region (WRKY). The interval 1300 to 1323 (RVFQNKDEPNKPHLPSSSTPPGNA) is disordered.

As to quaternary structure, interacts with PopP2, a R.solanacearum type III effector.

The protein localises to the nucleus. In terms of biological role, transcription factor. Interacts specifically with the W box (5'-(T)TGAC[CT]-3'), a frequently occurring elicitor-responsive cis-acting element. Also acts as a disease resistance protein involved in resistance to fungal and bacterial pathogens, including R.solanacearum, P.syringae pv. tomato and C.higginsianum. The polypeptide is Disease resistance protein RRS1 (Arabidopsis thaliana (Mouse-ear cress)).